We begin with the raw amino-acid sequence, 537 residues long: CTP synthase (537 aa).

The tract at residues 1-267 is amidoligase domain; that stretch reads MTNTKFVFVT…ISVLEERLFG (267 aa). Ser-15 contacts CTP. A UTP-binding site is contributed by Ser-15. 16–21 lines the ATP pocket; it reads SVGKGI. Residue Tyr-56 coordinates L-glutamine. Residue Asp-73 coordinates ATP. Mg(2+)-binding residues include Asp-73 and Glu-141. CTP is bound by residues 148–150, 188–193, and Lys-224; these read DIE and KTKPTQ. UTP contacts are provided by residues 188–193 and Lys-224; that span reads KTKPTQ. The Glutamine amidotransferase type-1 domain maps to 297–535; sequence YVVLPDAYLS…LSEAVAKASP (239 aa). Gly-355 contributes to the L-glutamine binding site. Cys-382 serves as the catalytic Nucleophile; for glutamine hydrolysis. L-glutamine is bound by residues 383–386, Glu-406, and Arg-463; that span reads LGMQ. Residues His-508 and Glu-510 contribute to the active site.

It belongs to the CTP synthase family. Homotetramer.

It carries out the reaction UTP + L-glutamine + ATP + H2O = CTP + L-glutamate + ADP + phosphate + 2 H(+). The catalysed reaction is L-glutamine + H2O = L-glutamate + NH4(+). The enzyme catalyses UTP + NH4(+) + ATP = CTP + ADP + phosphate + 2 H(+). It functions in the pathway pyrimidine metabolism; CTP biosynthesis via de novo pathway; CTP from UDP: step 2/2. Its activity is regulated as follows. Allosterically activated by GTP, when glutamine is the substrate; GTP has no effect on the reaction when ammonia is the substrate. The allosteric effector GTP functions by stabilizing the protein conformation that binds the tetrahedral intermediate(s) formed during glutamine hydrolysis. Inhibited by the product CTP, via allosteric rather than competitive inhibition. In terms of biological role, catalyzes the ATP-dependent amination of UTP to CTP with either L-glutamine or ammonia as the source of nitrogen. Regulates intracellular CTP levels through interactions with the four ribonucleotide triphosphates. The protein is CTP synthase of Coprothermobacter proteolyticus (strain ATCC 35245 / DSM 5265 / OCM 4 / BT).